The primary structure comprises 488 residues: Multidrug resistance outer membrane protein MdtP (488 aa).

Positions 1–23 are cleaved as a signal peptide; it reads MINRQLSRLLLCSILGSTTLISG. Cys24 is lipidated: N-palmitoyl cysteine. Cys24 carries the S-diacylglycerol cysteine lipid modification.

The protein belongs to the outer membrane factor (OMF) (TC 1.B.17) family. Could be part of a tripartite efflux system composed of MdtN, MdtO and MdtP.

It localises to the cell outer membrane. Functionally, could be involved in resistance to puromycin, acriflavine and tetraphenylarsonium chloride. This is Multidrug resistance outer membrane protein MdtP (mdtP) from Escherichia coli (strain K12).